A 252-amino-acid chain; its full sequence is MQVDLNCDLGEAFGNYSFGGDHQIIPLITSANIACGFHAGDENVMNETVKLAKEHGVGIGAHPGFHDLQGFGRRNIDMAPDEIYTLVAYQLGALSAFSRIHDVKINHVKPHGALYNMGARDKDIAHAIAQAVYDVDPSLILVGLSNTLLISEAEAVGLKTASEVFADRRYESNGQLVSRKESDAVISDTEAAINQVVKMVKDNKVTAKDGTEIDIQADTICVHGDGAHALEFVSKIRERLTKEGISITKLGG.

It belongs to the LamB/PxpA family. As to quaternary structure, forms a complex composed of PxpA, PxpB and PxpC.

The enzyme catalyses 5-oxo-L-proline + ATP + 2 H2O = L-glutamate + ADP + phosphate + H(+). Functionally, catalyzes the cleavage of 5-oxoproline to form L-glutamate coupled to the hydrolysis of ATP to ADP and inorganic phosphate. This chain is 5-oxoprolinase subunit A, found in Staphylococcus carnosus (strain TM300).